The following is a 55-amino-acid chain: Large ribosomal subunit protein bL33 (55 aa).

The protein belongs to the bacterial ribosomal protein bL33 family. In terms of assembly, part of the 50S ribosomal subunit. Contacts protein L35.

Functionally, binds the 23S rRNA and the E site tRNA. The sequence is that of Large ribosomal subunit protein bL33 (rpmG) from Deinococcus radiodurans (strain ATCC 13939 / DSM 20539 / JCM 16871 / CCUG 27074 / LMG 4051 / NBRC 15346 / NCIMB 9279 / VKM B-1422 / R1).